Consider the following 512-residue polypeptide: 2-isopropylmalate synthase (512 aa).

Positions 5–267 constitute a Pyruvate carboxyltransferase domain; it reads LYIFDTTLRD…DSRVDATQIV (263 aa). Positions 14, 202, 204, and 238 each coordinate Mn(2+). The segment at 393–512 is regulatory domain; that stretch reads KLVSLKVVSE…EEKMNAQAAA (120 aa).

It belongs to the alpha-IPM synthase/homocitrate synthase family. LeuA type 1 subfamily. Homodimer. Requires Mn(2+) as cofactor.

The protein resides in the cytoplasm. It carries out the reaction 3-methyl-2-oxobutanoate + acetyl-CoA + H2O = (2S)-2-isopropylmalate + CoA + H(+). It participates in amino-acid biosynthesis; L-leucine biosynthesis; L-leucine from 3-methyl-2-oxobutanoate: step 1/4. Functionally, catalyzes the condensation of the acetyl group of acetyl-CoA with 3-methyl-2-oxobutanoate (2-ketoisovalerate) to form 3-carboxy-3-hydroxy-4-methylpentanoate (2-isopropylmalate). In Chromobacterium violaceum (strain ATCC 12472 / DSM 30191 / JCM 1249 / CCUG 213 / NBRC 12614 / NCIMB 9131 / NCTC 9757 / MK), this protein is 2-isopropylmalate synthase.